The following is a 333-amino-acid chain: Dioxygenase cnsJ (333 aa).

Positions 153, 155, and 235 each coordinate Fe cation. Positions 309-333 (NAQPEGEDDGGMKPNEGEHVVEAQI) are disordered. The span at 323–333 (NEGEHVVEAQI) shows a compositional bias: basic and acidic residues.

This sequence belongs to the PhyH family. In terms of assembly, homodimer. Fe cation serves as cofactor.

The protein operates within alkaloid biosynthesis. Dioxygenase; part of the gene cluster that mediates the biosynthesis of communesins, a prominent class of indole alkaloids with great potential as pharmaceuticals. Communesins are biosynthesized by the coupling of tryptamine and aurantioclavine, two building blocks derived from L-tryptophan. The L-tryptophan decarboxylase cnsB converts L-tryptophan to tryptamine, whereas the tryptophan dimethylallyltransferase cnsF converts L-tryptophan to 4-dimethylallyl tryptophan which is further transformed to aurantioclavine by the aurantioclavine synthase cnsA, probably aided by the catalase cnsD. The cytochrome P450 monooxygenase cnsC catalyzes the heterodimeric coupling between the two different indole moieties, tryptamine and aurantioclavine, to construct vicinal quaternary stereocenters and yield the heptacyclic communesin scaffold. The O-methyltransferase cnsE then methylates the communesin scaffold to produce communesin K, the simplest characterized communesin that contains the heptacyclic core. The dioxygenase cnsJ converts communesin K into communesin I. Acylation to introduce the hexadienyl group at position N16 of communesin I by the acyltransferase cnsK leads to the production of communesin B. The hexadienyl group is produced by the highly reducing polyketide synthase cnsI, before being hydrolytically removed from cnsI by the serine hydrolase cnsH, converted into hexadienyl-CoA by the CoA ligase cnsG, and then transferred to communesin I by cnsK. Surprisingly, cnsK may also be a promiscuous acyltransferase that can tolerate a range of acyl groups, including acetyl-, propionyl-, and butyryl-CoA, which lead to communesins A, G and H respectively. The roles of the alpha-ketoglutarate-dependent dioxygenases cnsM and cnsP have still to be determined. This is Dioxygenase cnsJ from Penicillium expansum (Blue mold rot fungus).